We begin with the raw amino-acid sequence, 178 residues long: Large ribosomal subunit protein uL6 (178 aa).

The protein belongs to the universal ribosomal protein uL6 family. As to quaternary structure, part of the 50S ribosomal subunit.

This protein binds to the 23S rRNA, and is important in its secondary structure. It is located near the subunit interface in the base of the L7/L12 stalk, and near the tRNA binding site of the peptidyltransferase center. This chain is Large ribosomal subunit protein uL6, found in Streptococcus pneumoniae (strain 70585).